The chain runs to 164 residues: SsrA-binding protein (164 aa).

It belongs to the SmpB family.

The protein localises to the cytoplasm. Required for rescue of stalled ribosomes mediated by trans-translation. Binds to transfer-messenger RNA (tmRNA), required for stable association of tmRNA with ribosomes. tmRNA and SmpB together mimic tRNA shape, replacing the anticodon stem-loop with SmpB. tmRNA is encoded by the ssrA gene; the 2 termini fold to resemble tRNA(Ala) and it encodes a 'tag peptide', a short internal open reading frame. During trans-translation Ala-aminoacylated tmRNA acts like a tRNA, entering the A-site of stalled ribosomes, displacing the stalled mRNA. The ribosome then switches to translate the ORF on the tmRNA; the nascent peptide is terminated with the 'tag peptide' encoded by the tmRNA and targeted for degradation. The ribosome is freed to recommence translation, which seems to be the essential function of trans-translation. The polypeptide is SsrA-binding protein (Corynebacterium efficiens (strain DSM 44549 / YS-314 / AJ 12310 / JCM 11189 / NBRC 100395)).